An 81-amino-acid chain; its full sequence is MGKKRVTDHKLNVDKVIKNINTISSELKKIKELSQLLLCDLILHFNHPIKTENLAEAERNNPLFEESKISDVSLVSNSFSI.

This is an uncharacterized protein from Homo sapiens (Human).